A 357-amino-acid chain; its full sequence is Fructose-1,6-bisphosphatase class 1 3 (357 aa).

Positions 94, 116, 118, and 119 each coordinate Mg(2+). Substrate contacts are provided by residues 119–122 (DGSS) and Asn211. Glu283 contacts Mg(2+).

Belongs to the FBPase class 1 family. Homotetramer. Requires Mg(2+) as cofactor.

It localises to the cytoplasm. The enzyme catalyses beta-D-fructose 1,6-bisphosphate + H2O = beta-D-fructose 6-phosphate + phosphate. It functions in the pathway carbohydrate biosynthesis; Calvin cycle. This is Fructose-1,6-bisphosphatase class 1 3 from Methylibium petroleiphilum (strain ATCC BAA-1232 / LMG 22953 / PM1).